A 179-amino-acid polypeptide reads, in one-letter code: Translationally-controlled tumor protein homolog (179 aa).

The region spanning 1 to 179 (MIIYKDIISG…WKHGLEEMKV (179 aa)) is the TCTP domain.

It belongs to the TCTP family.

It is found in the cytoplasm. Its subcellular location is the cytoskeleton. Involved in protein synthesis. Involved in microtubule stabilization. The sequence is that of Translationally-controlled tumor protein homolog from Aspergillus fumigatus (strain ATCC MYA-4609 / CBS 101355 / FGSC A1100 / Af293) (Neosartorya fumigata).